The following is a 448-amino-acid chain: Zinc finger and BTB domain-containing protein 44 (448 aa).

Positions 31–98 (CDITIRVQDK…AYTATLSINT (68 aa)) constitute a BTB domain. Residues 289-298 (LSDEEVHEEV) show a composition bias toward basic and acidic residues. A disordered region spans residues 289–320 (LSDEEVHEEVSQPVSASQSSMSDQQTVPGSEQ). Positions 299 to 313 (SQPVSASQSSMSDQQ) are enriched in low complexity. C2H2-type zinc fingers lie at residues 394-416 (FQCP…MLIH) and 422-444 (FQCD…RLKH).

Its subcellular location is the nucleus. In Xenopus tropicalis (Western clawed frog), this protein is Zinc finger and BTB domain-containing protein 44 (zbtb44).